The primary structure comprises 459 residues: Putative flavin-containing monooxygenase 2 (459 aa).

Residues 17–21, Glu-38, and 46–47 each bind FAD; these read GAGVS and VW. 217–220 contributes to the NADP(+) binding site; that stretch reads SAID.

It belongs to the FMO family. FAD is required as a cofactor.

This is Putative flavin-containing monooxygenase 2 (FMO2) from Arabidopsis thaliana (Mouse-ear cress).